A 116-amino-acid chain; its full sequence is NADH-ubiquinone oxidoreductase chain 3 (116 aa).

The next 3 helical transmembrane spans lie at 3–23 (LFAT…LVSF), 56–76 (FFLV…LLPL), and 88–108 (TLFW…YEWA).

This sequence belongs to the complex I subunit 3 family. As to quaternary structure, core subunit of respiratory chain NADH dehydrogenase (Complex I) which is composed of 45 different subunits.

It localises to the mitochondrion inner membrane. The enzyme catalyses a ubiquinone + NADH + 5 H(+)(in) = a ubiquinol + NAD(+) + 4 H(+)(out). Its function is as follows. Core subunit of the mitochondrial membrane respiratory chain NADH dehydrogenase (Complex I) which catalyzes electron transfer from NADH through the respiratory chain, using ubiquinone as an electron acceptor. Essential for the catalytic activity of complex I. The chain is NADH-ubiquinone oxidoreductase chain 3 (mt-nd3) from Danio rerio (Zebrafish).